The chain runs to 81 residues: Protein Vpu (81 aa).

Residues 1 to 7 (MQSLQIL) are Extracellular-facing. Residues 8-28 (AIVSLVVVAIIAIVVWTIVLI) form a helical membrane-spanning segment. Residues 29-81 (EYRKILRQRKIDRLFDRIREKAEDSGNESERDQEELSALVEMGHLAPWDVDDL) are Cytoplasmic-facing. Phosphoserine; by host CK2 is present on residues Ser53 and Ser57.

It belongs to the HIV-1 VPU protein family. In terms of assembly, homopentamer. Interacts with host CD4 and BRTC; these interactions induce proteasomal degradation of CD4. Interacts with host BST2; this interaction leads to the degradation of host BST2. Interacts with host FBXW11. Interacts with host AP1M1; this interaction plays a role in the mistrafficking and subsequent degradation of host BST2. Interacts with host RANBP2; this interaction allows Vpu to down-regulate host BLM sumoylation. In terms of processing, phosphorylated by host CK2. This phosphorylation is necessary for interaction with human BTRC and degradation of CD4.

Its subcellular location is the host membrane. Ion channel activity is inhibited by hexamethylene amiloride in vitro. Enhances virion budding by targeting host CD4 and Tetherin/BST2 to proteasome degradation. Degradation of CD4 prevents any unwanted premature interactions between viral Env and its host receptor CD4 in the endoplasmic reticulum. Degradation of antiretroviral protein Tetherin/BST2 is important for virion budding, as BST2 tethers new viral particles to the host cell membrane. Mechanistically, Vpu bridges either CD4 or BST2 to BTRC, a substrate recognition subunit of the Skp1/Cullin/F-box protein E3 ubiquitin ligase, induces their ubiquitination and subsequent proteasomal degradation. The alteration of the E3 ligase specificity by Vpu seems to promote the degradation of host IKBKB, leading to NF-kappa-B down-regulation and subsequent apoptosis. Acts as a viroporin that forms an oligomeric ion channel in membranes. Modulates the host DNA repair mechanisms to promote degradation of nuclear viral cDNA in cells that are already productively infected in order to suppress immune sensing and proviral hyper-integration (superinfection). Manipulates PML-NBs and modulates SUMOylation of host BLM protein thereby enhancing its DNA-end processing activity toward viral unintegrated linear DNA. Also inhibits RAD52-mediated homologous repair of viral cDNA, preventing the generation of dead-end circular forms of single copies of the long terminal repeat and permitting sustained nucleolytic attack. This is Protein Vpu from Homo sapiens (Human).